The chain runs to 616 residues: MPKLRSATSTEGRNMAGARALWRATGVKENDFGKPIIAIANSFTQFVPGHVHLKDMGSLVAGAIEEAGGIAKEFNTIAVDDGIAMGHGGMLYSLPSRELISDSVEYMVNAHCADALVCISNCDKITPGMMMAALRLNIPVIFVSGGPMEAGKTKLSDKIIKLDLVDAMVAGADDRVSDEDSEQIERSACPTCGSCSGMFTANSMNCLTEALGLSLPGNGSMLATHADRRELFLEAGRRIMDLTTRYYKHDDESALPRNIANFNAFENAMTLDIAMGGSSNTVLHLLAAAQEGEVDFTMEDIDRLSRLVPHLCKVAPSTPEYHMEDVHRAGGVMGILGELDRAGLIHNDAYHVAGASLKEVLAKWDIAQSSDEAVHRFFSAGPAGIPTTKAFSQACRWDSVDNDRVGGCIRKREFAFSQEGGLAVLSGNIAVDGCIVKTAGVDEDNHTFIGSARVYESQDDAVAGILGGEVVAGDVVVIRYEGPKGGPGMQEMLYPTSYLKSRGLGKACALITDGRFSGGTSGLSIGHVSPEAAAGGTIGLVETGDRIEIDIPARSIKLAISDIELAARRSAMEARGKQAWKPVGRVREVSLALKAYALLATSADKGAVRDTSKLED.

Position 81 (Asp81) interacts with Mg(2+). Cys122 lines the [2Fe-2S] cluster pocket. Mg(2+)-binding residues include Asp123 and Lys124. The residue at position 124 (Lys124) is an N6-carboxylysine. Cys195 contacts [2Fe-2S] cluster. Position 491 (Glu491) interacts with Mg(2+). Ser517 (proton acceptor) is an active-site residue.

This sequence belongs to the IlvD/Edd family. Homodimer. Requires [2Fe-2S] cluster as cofactor. The cofactor is Mg(2+).

It catalyses the reaction (2R)-2,3-dihydroxy-3-methylbutanoate = 3-methyl-2-oxobutanoate + H2O. It carries out the reaction (2R,3R)-2,3-dihydroxy-3-methylpentanoate = (S)-3-methyl-2-oxopentanoate + H2O. Its pathway is amino-acid biosynthesis; L-isoleucine biosynthesis; L-isoleucine from 2-oxobutanoate: step 3/4. It functions in the pathway amino-acid biosynthesis; L-valine biosynthesis; L-valine from pyruvate: step 3/4. Its function is as follows. Functions in the biosynthesis of branched-chain amino acids. Catalyzes the dehydration of (2R,3R)-2,3-dihydroxy-3-methylpentanoate (2,3-dihydroxy-3-methylvalerate) into 2-oxo-3-methylpentanoate (2-oxo-3-methylvalerate) and of (2R)-2,3-dihydroxy-3-methylbutanoate (2,3-dihydroxyisovalerate) into 2-oxo-3-methylbutanoate (2-oxoisovalerate), the penultimate precursor to L-isoleucine and L-valine, respectively. The sequence is that of Dihydroxy-acid dehydratase from Shewanella sediminis (strain HAW-EB3).